Consider the following 248-residue polypeptide: Mannose-binding protein C (248 aa).

A signal peptide spans 1 to 20 (MSLIPSLSLLLMSMVAASYS). Residues 42-99 (GINGFPGKDGRDGTKGEKGEPGQGLRGLQGPPGKLGPPGNPGPSGSPGPKGQKGDPGK) form the Collagen-like domain. Residues 43-107 (INGFPGKDGR…GKSPDCDSSL (65 aa)) are disordered. Pro-47 carries the post-translational modification 4-hydroxyproline. Basic and acidic residues predominate over residues 49–61 (KDGRDGTKGEKGE). 4-hydroxyproline is present on residues Pro-73, Pro-79, Pro-82, and Pro-88. Residues 75–87 (KLGPPGNPGPSGS) are compositionally biased toward pro residues. Residues 93-102 (QKGDPGKSPD) are compositionally biased toward basic and acidic residues. Residues 112 to 130 (RKALQTEMARIKKWLTFSL) adopt a coiled-coil conformation. Residues 134 to 245 (VGNKFFLTNG…CSSSHLAVCE (112 aa)) form the C-type lectin domain. Intrachain disulfides connect Cys-155–Cys-244 and Cys-222–Cys-236.

In terms of assembly, oligomeric complex of 3 or more homotrimers. Interacts with MASP1 and MASP2. Interacts with MEP1A and MEP1B and may inhibit their catalytic activity. Post-translationally, hydroxylation on proline residues within the sequence motif, GXPG, is most likely to be 4-hydroxy as this fits the requirement for 4-hydroxylation in vertebrates.

The protein localises to the secreted. Calcium-dependent lectin involved in innate immune defense. Binds mannose, fucose and N-acetylglucosamine on different microorganisms and activates the lectin complement pathway. Binds to late apoptotic cells, as well as to apoptotic blebs and to necrotic cells, but not to early apoptotic cells, facilitating their uptake by macrophages. The sequence is that of Mannose-binding protein C (MBL2) from Hylobates lar (Lar gibbon).